The sequence spans 310 residues: Dicarboxylate carrier UCP2 (310 aa).

Residues 1-10 (MVGFRAGDVP) are Mitochondrial intermembrane-facing. Residues 11 to 32 (PTATVKFIGAGTAACIADLFTF) form a helical membrane-spanning segment. 3 Solcar repeats span residues 11-107 (PTAT…VKQF), 115-204 (AGIG…IKDA), and 213-298 (DDLP…LKRA). Over 33-78 (PLDTAKVRLQIQGENKASTNMGRGPVKYRGVFGTISTMVRVEGPRS) the chain is Mitochondrial matrix. A helical membrane pass occupies residues 79–101 (LYSGLVAGLQRQMSFASVRIGLY). Residues 102–120 (DSVKQFYTKGSDHAGIGSR) are Mitochondrial intermembrane-facing. A helical transmembrane segment spans residues 121-137 (LMAGCTTGAMAVAVAQP). At 138 to 181 (TDVLKVRFQAQVSAGASKRYHSTMDAYRTIAKEEGFRGLWKGTG) the chain is on the mitochondrial matrix side. A helical transmembrane segment spans residues 182–198 (PNITRNAIVNCTELVTY). Residues 199–215 (DLIKDALLKSSLMTDDL) are Mitochondrial intermembrane-facing. Residues 216–235 (PCHFTSAFGAGFCTTIIASP) form a helical membrane-spanning segment. Over 236–269 (VDVVKTRYMNSAQGQYSSALNCAVAMLTKKGPKA) the chain is Mitochondrial matrix. The chain crosses the membrane as a helical span at residues 270-292 (FFKGFMPSFLRLGSWNVVMFVTY). The purine nucleotide binding stretch occupies residues 277–299 (SFLRLGSWNVVMFVTYEQLKRAM). At 293 to 310 (EQLKRAMMAARQNWHTPL) the chain is on the mitochondrial intermembrane side.

It belongs to the mitochondrial carrier (TC 2.A.29) family. In terms of assembly, homotetramer. Adopts an asymmetrical dimer of dimers functional form.

It is found in the mitochondrion inner membrane. It carries out the reaction L-aspartate(out) + phosphate(in) + H(+)(in) = L-aspartate(in) + phosphate(out) + H(+)(out). The enzyme catalyses oxaloacetate(out) + phosphate(in) + H(+)(in) = oxaloacetate(in) + phosphate(out) + H(+)(out). The catalysed reaction is (S)-malate(out) + phosphate(in) + H(+)(in) = (S)-malate(in) + phosphate(out) + H(+)(out). It catalyses the reaction malonate(out) + phosphate(in) + H(+)(in) = malonate(in) + phosphate(out) + H(+)(out). It carries out the reaction sulfate(out) + phosphate(in) + H(+)(in) = sulfate(in) + phosphate(out) + H(+)(out). The enzyme catalyses (S)-malate(out) = (S)-malate(in). The catalysed reaction is L-aspartate(out) = L-aspartate(in). It catalyses the reaction phosphate(in) = phosphate(out). It carries out the reaction chloride(in) = chloride(out). The enzyme catalyses H(+)(in) = H(+)(out). The catalysed reaction is a long-chain fatty acid(out) = a long-chain fatty acid(in). UCP are mitochondrial transporter proteins that create proton leaks across the inner mitochondrial membrane, thus uncoupling oxidative phosphorylation from ATP synthesis. As a result, energy is dissipated in the form of heat. Its function is as follows. Antiporter that exports dicarboxylate intermediates of the Krebs cycle in exchange for phosphate plus a proton across the inner membrane of mitochondria, a process driven by mitochondrial motive force with an overall impact on glycolysis, glutaminolysis and glutathione-dependent redox balance. Continuous export of oxaloacetate and related four-carbon dicarboxylates from mitochondrial matrix into the cytosol negatively regulates the oxidation of acetyl-CoA substrates via the Krebs cycle, lowering the ATP/ADP ratio and reactive oxygen species (ROS) production. May mediate inducible proton entry into the mitochondrial matrix affecting ATP turnover as a protection mechanism against oxidative stress. The proton currents are most likely associated with fatty acid flipping across the inner membrane of mitochondria in a metabolic process regulated by free fatty acids and purine nucleotides. This Danio rerio (Zebrafish) protein is Dicarboxylate carrier UCP2 (ucp2).